The following is a 269-amino-acid chain: NAD kinase (269 aa).

Asp45 (proton acceptor) is an active-site residue. NAD(+)-binding positions include 45–46, 122–123, Arg149, Asp151, and Ala186; these read DG and NE.

Belongs to the NAD kinase family. It depends on a divalent metal cation as a cofactor.

The protein localises to the cytoplasm. The enzyme catalyses NAD(+) + ATP = ADP + NADP(+) + H(+). In terms of biological role, involved in the regulation of the intracellular balance of NAD and NADP, and is a key enzyme in the biosynthesis of NADP. Catalyzes specifically the phosphorylation on 2'-hydroxyl of the adenosine moiety of NAD to yield NADP. This chain is NAD kinase, found in Staphylococcus carnosus (strain TM300).